The following is a 408-amino-acid chain: Probable fructose-2,6-bisphosphatase C732.02c (408 aa).

Residue 16–24 (GLPASGKTS) coordinates ATP. Residue Asp88 is part of the active site. 127–132 (NITDMC) provides a ligand contact to ATP. Tyr157 is a beta-D-fructose 6-phosphate binding site. Position 213 (Arg213) interacts with beta-D-fructose 2,6-bisphosphate. Catalysis depends on His214, which acts as the Tele-phosphohistidine intermediate. Beta-D-fructose 2,6-bisphosphate-binding residues include Asn220 and Gly226. Residue Glu285 is the Proton donor/acceptor of the active site. Beta-D-fructose 2,6-bisphosphate-binding residues include Tyr296, Arg310, Lys314, Tyr325, Gln351, and Arg355. 307–310 (AELR) is a binding site for ATP. Residues 351–355 (QAILR) and Tyr387 each bind ATP.

In the C-terminal section; belongs to the phosphoglycerate mutase family.

It carries out the reaction beta-D-fructose 2,6-bisphosphate + H2O = beta-D-fructose 6-phosphate + phosphate. Its function is as follows. This is predominantly if not solely a fructose-2,6-bisphosphatase. In Schizosaccharomyces pombe (strain 972 / ATCC 24843) (Fission yeast), this protein is Probable fructose-2,6-bisphosphatase C732.02c.